A 220-amino-acid polypeptide reads, in one-letter code: Protein LURP-one-related 12 (220 aa).

Belongs to the LOR family.

Might be related to the phospholipid scramblase and tubby-like superfamily of membrane tethered transcription factors. This chain is Protein LURP-one-related 12, found in Arabidopsis thaliana (Mouse-ear cress).